The sequence spans 505 residues: Protein FAM114A2 (505 aa).

Residues 1 to 65 form a disordered region; it reads MSDKDDIETP…KPSSDLETSK (65 aa). Residues 51–63 are compositionally biased toward basic and acidic residues; it reads KRPETKPSSDLET. 3 positions are modified to phosphoserine: S87, S146, and S209. The stretch at 268 to 295 forms a coiled coil; sequence LNSLSGEELETLKVELEQLKETFSLAEF. Positions 342–366 are disordered; the sequence is KSLTKPLAENEEGEKQSEAENTEQV.

This sequence belongs to the FAM114 family.

This Homo sapiens (Human) protein is Protein FAM114A2 (FAM114A2).